The primary structure comprises 1452 residues: ABC-type transporter adrC (1452 aa).

Residues 1–38 (MAPEEGDQAMSHEDKAACSSLNTTSSTELFDGAPSSEN) form a disordered region. Residues 19–28 (SSLNTTSSTE) show a composition bias toward polar residues. Positions 116–378 (KRLMSIVGNK…FETMGWKRPP (263 aa)) constitute an ABC transporter 1 domain. Transmembrane regions (helical) follow at residues 487 to 507 (IPAL…IGSL), 524 to 544 (VLFL…TTLY), 569 to 589 (VIVD…IVYF), 598 to 618 (SHFF…ATIF), 631 to 651 (AMAL…FTVP), and 738 to 758 (GILV…TELI). In terms of domain architecture, ABC transporter 2 spans 813-1055 (FSWKGLSYDI…TVLEYLEDKG (243 aa)). ATP is bound at residue 849-856 (GVSGAGKT). 7 consecutive transmembrane segments (helical) span residues 1149–1169 (YILA…FSFW), 1181–1201 (VLFS…QIMP), 1224–1244 (VFIL…GICT), 1264–1284 (LVLL…QLVV), 1287–1307 (VPSV…CLLF), 1322–1344 (IFMN…ALHG), and 1415–1435 (FGIF…LYYL).

It belongs to the ABC transporter superfamily. ABCG family. PDR (TC 3.A.1.205) subfamily.

The protein resides in the membrane. In terms of biological role, ABC-type transporter; part of the gene cluster that mediates the biosynthesis of the meroterpenoid compound andrastin A, a promising antitumoral compound. Is required for the production of andrastin A but does not have a significant role in its secretion. The chain is ABC-type transporter adrC from Penicillium roqueforti.